A 230-amino-acid chain; its full sequence is Orotidine 5'-phosphate decarboxylase (230 aa).

Substrate-binding positions include Asp16, Lys38, 65 to 74 (DLKLHDIGNT), Thr119, Arg180, Gln189, Gly209, and Arg210. Lys67 serves as the catalytic Proton donor.

The protein belongs to the OMP decarboxylase family. Type 1 subfamily. Homodimer.

It carries out the reaction orotidine 5'-phosphate + H(+) = UMP + CO2. It functions in the pathway pyrimidine metabolism; UMP biosynthesis via de novo pathway; UMP from orotate: step 2/2. Catalyzes the decarboxylation of orotidine 5'-monophosphate (OMP) to uridine 5'-monophosphate (UMP). This chain is Orotidine 5'-phosphate decarboxylase, found in Methylobacterium radiotolerans (strain ATCC 27329 / DSM 1819 / JCM 2831 / NBRC 15690 / NCIMB 10815 / 0-1).